We begin with the raw amino-acid sequence, 119 residues long: Large ribosomal subunit protein uL14 (119 aa).

It belongs to the universal ribosomal protein uL14 family. Part of the 50S ribosomal subunit. Forms a cluster with proteins L3 and L19. In the 70S ribosome, L14 and L19 interact and together make contacts with the 16S rRNA in bridges B5 and B8.

Binds to 23S rRNA. Forms part of two intersubunit bridges in the 70S ribosome. In Anaplasma marginale (strain St. Maries), this protein is Large ribosomal subunit protein uL14.